Consider the following 235-residue polypeptide: Uridylate kinase (235 aa).

12 to 15 (KISG) contributes to the ATP binding site. A UMP-binding site is contributed by Gly-54. 2 residues coordinate ATP: Gly-55 and Arg-59. Residues Asp-72 and 133-140 (TGNPFFST) each bind UMP. ATP-binding residues include Tyr-166 and Asp-169.

The protein belongs to the UMP kinase family. Homohexamer.

The protein localises to the cytoplasm. The catalysed reaction is UMP + ATP = UDP + ADP. It participates in pyrimidine metabolism; CTP biosynthesis via de novo pathway; UDP from UMP (UMPK route): step 1/1. Its activity is regulated as follows. Inhibited by UTP. Catalyzes the reversible phosphorylation of UMP to UDP. In Acetivibrio thermocellus (strain ATCC 27405 / DSM 1237 / JCM 9322 / NBRC 103400 / NCIMB 10682 / NRRL B-4536 / VPI 7372) (Clostridium thermocellum), this protein is Uridylate kinase.